A 745-amino-acid chain; its full sequence is Copper-transporting ATPase (745 aa).

In terms of domain architecture, HMA spans 1-67 (MKESFYIEGM…LIEKLGYSPK (67 aa)). Residues 1–83 (MKESFYIEGM…KKEFFSPNVK (83 aa)) are Cytoplasmic-facing. Cu cation is bound by residues Cys-12 and Cys-15. The chain crosses the membrane as a helical span at residues 84-104 (LALAVIFTLFVVYLSMGAMLS). At 105–124 (PSLLPKSLLAIDNHSNFLNA) the chain is on the extracellular side. Residues 125 to 144 (CLQLIGTLIVMHWGRDFYIQ) form a helical membrane-spanning segment. Over 145-151 (GFKALWH) the chain is Cytoplasmic. Residues 152–172 (RQPNMSSLIAIGTSAALISSL) traverse the membrane as a helical segment. The Extracellular portion of the chain corresponds to 173–194 (WQLYLVYTDHYTDQWSYGHYYF). A helical membrane pass occupies residues 195 to 215 (ESVCVILMFVMVGKRIENVSK). Topologically, residues 216 to 343 (DKALDAMQAL…KAEISRLADK (128 aa)) are cytoplasmic. Residues 344–366 (VSSVFVPSVIAIAILAFVVWLII) form a helical membrane-spanning segment. Topologically, residues 367–379 (APKPDFWWNFGIA) are extracellular. A helical transmembrane segment spans residues 380 to 397 (LEVFVSVLVISCPCALGL). The Cytoplasmic portion of the chain corresponds to 398-685 (ATLMSILVAN…KLSQATIKNI (288 aa)). The 4-aspartylphosphate intermediate role is filled by Asp-435. Asp-631 and Asp-635 together coordinate Mg(2+). The helical transmembrane segment at 686–705 (KENLFWAFCYNSVFIPLACG) threads the bilayer. The Extracellular segment spans residues 706 to 716 (VLYKANIMLSP). Residues 717–735 (AIAGLAMSLSSVSVVLNSQ) form a helical membrane-spanning segment. At 736–745 (RLRNFKIKDH) the chain is on the cytoplasmic side.

It belongs to the cation transport ATPase (P-type) (TC 3.A.3) family. Type IB subfamily.

It is found in the cell membrane. It catalyses the reaction Cu(2+)(in) + ATP + H2O = Cu(2+)(out) + ADP + phosphate + H(+). Functionally, probably involved in copper export. This Helicobacter pylori (Campylobacter pylori) protein is Copper-transporting ATPase (copA).